The primary structure comprises 168 residues: Xanthine-guanine phosphoribosyltransferase (168 aa).

5-phospho-alpha-D-ribose 1-diphosphate is bound by residues 43-44 and 102-110; these read RG and DDLVDTGAT. Aspartate 103 contributes to the Mg(2+) binding site. Residues aspartate 106 and isoleucine 149 each coordinate guanine. Xanthine is bound by residues aspartate 106 and isoleucine 149. Residues 106-110 and 148-149 contribute to the GMP site; these read DTGAT and WI.

It belongs to the purine/pyrimidine phosphoribosyltransferase family. XGPT subfamily. As to quaternary structure, homotetramer. Mg(2+) is required as a cofactor.

It localises to the cell inner membrane. The catalysed reaction is GMP + diphosphate = guanine + 5-phospho-alpha-D-ribose 1-diphosphate. It catalyses the reaction XMP + diphosphate = xanthine + 5-phospho-alpha-D-ribose 1-diphosphate. The enzyme catalyses IMP + diphosphate = hypoxanthine + 5-phospho-alpha-D-ribose 1-diphosphate. The protein operates within purine metabolism; GMP biosynthesis via salvage pathway; GMP from guanine: step 1/1. It functions in the pathway purine metabolism; XMP biosynthesis via salvage pathway; XMP from xanthine: step 1/1. Purine salvage pathway enzyme that catalyzes the transfer of the ribosyl-5-phosphate group from 5-phospho-alpha-D-ribose 1-diphosphate (PRPP) to the N9 position of the 6-oxopurines guanine and xanthine to form the corresponding ribonucleotides GMP (guanosine 5'-monophosphate) and XMP (xanthosine 5'-monophosphate), with the release of PPi. To a lesser extent, also acts on hypoxanthine. The protein is Xanthine-guanine phosphoribosyltransferase of Nitrobacter winogradskyi (strain ATCC 25391 / DSM 10237 / CIP 104748 / NCIMB 11846 / Nb-255).